Here is a 564-residue protein sequence, read N- to C-terminus: Chaperonin GroEL 2 (564 aa).

ATP-binding positions include 29–32 (TIGP), 86–90 (DGTTT), G413, and D493. The tract at residues 521–541 (DKPEPPAPAGDGGGDPMGGMG) is disordered. Residues 530-541 (GDGGGDPMGGMG) are compositionally biased toward gly residues.

Belongs to the chaperonin (HSP60) family. As to quaternary structure, forms a cylinder of 14 subunits composed of two heptameric rings stacked back-to-back. Interacts with the co-chaperonin GroES.

It is found in the cytoplasm. The catalysed reaction is ATP + H2O + a folded polypeptide = ADP + phosphate + an unfolded polypeptide.. Functionally, together with its co-chaperonin GroES, plays an essential role in assisting protein folding. The GroEL-GroES system forms a nano-cage that allows encapsulation of the non-native substrate proteins and provides a physical environment optimized to promote and accelerate protein folding. In Prochlorococcus marinus (strain MIT 9303), this protein is Chaperonin GroEL 2.